The following is a 123-amino-acid chain: MVIFSYRTRIIYIKKIKNKRDTRAKRYVIFDIISEDNFEIREIEEAVRNSVKELGGKIWLDLSNPKVIMIYNNRGIISTNRIGYKIIIASLPLIKKIKNKEVLLVPRRTTGSLKRAKRLIGIE.

This sequence belongs to the eukaryotic/archaeal RNase P protein component 2 family. As to quaternary structure, consists of a catalytic RNA component and at least 4-5 protein subunits.

It localises to the cytoplasm. It catalyses the reaction Endonucleolytic cleavage of RNA, removing 5'-extranucleotides from tRNA precursor.. In terms of biological role, part of ribonuclease P, a protein complex that generates mature tRNA molecules by cleaving their 5'-ends. The protein is Ribonuclease P protein component 2 of Sulfurisphaera tokodaii (strain DSM 16993 / JCM 10545 / NBRC 100140 / 7) (Sulfolobus tokodaii).